We begin with the raw amino-acid sequence, 1939 residues long: Myosin-4 (1939 aa).

Residues 33–82 (DAKSSVFVVDAKESYVKATVQSREGGKVTAKTEGGATVTVKEDQVFSMNP) enclose the Myosin N-terminal SH3-like domain. Phosphoserine is present on Ser-36. Phosphothreonine is present on residues Thr-64 and Thr-69. Ser-79 is modified (phosphoserine). One can recognise a Myosin motor domain in the interval 86–782 (DKIEDMAMMT…LLGTLEEMRD (697 aa)). Lys-130 carries the post-translational modification N6,N6,N6-trimethyllysine. 179–186 (GESGAGKT) is a binding site for ATP. At Tyr-389 the chain carries Phosphotyrosine. Residue Thr-391 is modified to Phosphothreonine. The residue at position 392 (Ser-392) is a Phosphoserine. Thr-419 carries the post-translational modification Phosphothreonine. Tyr-424 is subject to Phosphotyrosine. Phosphoserine is present on Ser-625. The actin-binding stretch occupies residues 659-681 (LNKLMTNLKSTHPHFVRCLIPNE). The residue at position 757 (His-757) is a Pros-methylhistidine. The segment at 761–775 (KFGHTKVFFKAGLLG) is actin-binding. Thr-776 is modified (phosphothreonine). Positions 785-814 (LAQLITRTQAVCRGYLMRVEFRKMMERRES) constitute an IQ domain. Residues 843–1939 (LLKSAETEKE…EVHTKVISEE (1097 aa)) adopt a coiled-coil conformation. 2 positions are modified to phosphoserine: Ser-1092 and Ser-1096. 2 disordered regions span residues 1128–1147 (AERASRAKAEKQRSDLSREL) and 1153–1172 (RLEEAGGATSAQIEMNKKRE). Phosphoserine is present on residues Ser-1162 and Ser-1237. At Thr-1241 the chain carries Phosphothreonine. Phosphoserine is present on Ser-1243. Thr-1255 is subject to Phosphothreonine. A Phosphoserine modification is found at Ser-1261. At Thr-1265 the chain carries Phosphothreonine. Ser-1278 carries the post-translational modification Phosphoserine. Residue Thr-1286 is modified to Phosphothreonine. Phosphoserine occurs at positions 1288, 1292, 1303, 1306, and 1413. Phosphotyrosine is present on Tyr-1464. Residue Thr-1467 is modified to Phosphothreonine. Ser-1474 is subject to Phosphoserine. Tyr-1492 carries the post-translational modification Phosphotyrosine. The residue at position 1495 (Ser-1495) is a Phosphoserine. Phosphothreonine is present on Thr-1501. Residue Ser-1514 is modified to Phosphoserine. Position 1517 is a phosphothreonine (Thr-1517). Residues Ser-1542, Ser-1547, Ser-1554, Ser-1574, Ser-1600, Ser-1603, Ser-1714, and Ser-1726 each carry the phosphoserine modification. Residues Thr-1730 and Thr-1736 each carry the phosphothreonine modification. Position 1739 is a phosphoserine (Ser-1739).

It belongs to the TRAFAC class myosin-kinesin ATPase superfamily. Myosin family. As to quaternary structure, muscle myosin is a hexameric protein that consists of 2 heavy chain subunits (MHC), 2 alkali light chain subunits (MLC) and 2 regulatory light chain subunits (MLC-2).

Its subcellular location is the cytoplasm. The protein localises to the myofibril. In terms of biological role, muscle contraction. In Rattus norvegicus (Rat), this protein is Myosin-4.